Here is a 473-residue protein sequence, read N- to C-terminus: ATP synthase subunit beta (473 aa).

153-160 is an ATP binding site; sequence GGAGVGKT.

The protein belongs to the ATPase alpha/beta chains family. As to quaternary structure, F-type ATPases have 2 components, CF(1) - the catalytic core - and CF(0) - the membrane proton channel. CF(1) has five subunits: alpha(3), beta(3), gamma(1), delta(1), epsilon(1). CF(0) has three main subunits: a(1), b(2) and c(9-12). The alpha and beta chains form an alternating ring which encloses part of the gamma chain. CF(1) is attached to CF(0) by a central stalk formed by the gamma and epsilon chains, while a peripheral stalk is formed by the delta and b chains.

It is found in the cell inner membrane. The catalysed reaction is ATP + H2O + 4 H(+)(in) = ADP + phosphate + 5 H(+)(out). Produces ATP from ADP in the presence of a proton gradient across the membrane. The catalytic sites are hosted primarily by the beta subunits. The polypeptide is ATP synthase subunit beta (Rickettsia bellii (strain OSU 85-389)).